The chain runs to 561 residues: Oxygen-dependent choline dehydrogenase (561 aa).

An FAD-binding site is contributed by 6–35 (DYIIIGAGSAGNVLATRLTEDADVSVLLLE). H475 (proton acceptor) is an active-site residue.

The protein belongs to the GMC oxidoreductase family. Requires FAD as cofactor.

It catalyses the reaction choline + A = betaine aldehyde + AH2. It carries out the reaction betaine aldehyde + NAD(+) + H2O = glycine betaine + NADH + 2 H(+). It functions in the pathway amine and polyamine biosynthesis; betaine biosynthesis via choline pathway; betaine aldehyde from choline (cytochrome c reductase route): step 1/1. Its function is as follows. Involved in the biosynthesis of the osmoprotectant glycine betaine. Catalyzes the oxidation of choline to betaine aldehyde and betaine aldehyde to glycine betaine at the same rate. This Pseudomonas aeruginosa (strain LESB58) protein is Oxygen-dependent choline dehydrogenase.